The sequence spans 343 residues: GTPase Obg (343 aa).

The 159-residue stretch at Met1–Leu159 folds into the Obg domain. An OBG-type G domain is found at Ala160–Gln334. GTP-binding positions include Gly166 to Ser173, Phe191 to Tyr195, Asp213 to Gly216, Asn284 to Asp287, and Ser315 to Leu317. Positions 173 and 193 each coordinate Mg(2+).

It belongs to the TRAFAC class OBG-HflX-like GTPase superfamily. OBG GTPase family. As to quaternary structure, monomer. Mg(2+) serves as cofactor.

Its subcellular location is the cytoplasm. An essential GTPase which binds GTP, GDP and possibly (p)ppGpp with moderate affinity, with high nucleotide exchange rates and a fairly low GTP hydrolysis rate. Plays a role in control of the cell cycle, stress response, ribosome biogenesis and in those bacteria that undergo differentiation, in morphogenesis control. In Nitrosomonas europaea (strain ATCC 19718 / CIP 103999 / KCTC 2705 / NBRC 14298), this protein is GTPase Obg.